We begin with the raw amino-acid sequence, 216 residues long: FMN-dependent NADH:quinone oxidoreductase (216 aa).

FMN is bound by residues Ser10 and 15–17 (SIS).

The protein belongs to the azoreductase type 1 family. In terms of assembly, homodimer. FMN is required as a cofactor.

It carries out the reaction 2 a quinone + NADH + H(+) = 2 a 1,4-benzosemiquinone + NAD(+). It catalyses the reaction N,N-dimethyl-1,4-phenylenediamine + anthranilate + 2 NAD(+) = 2-(4-dimethylaminophenyl)diazenylbenzoate + 2 NADH + 2 H(+). In terms of biological role, quinone reductase that provides resistance to thiol-specific stress caused by electrophilic quinones. Also exhibits azoreductase activity. Catalyzes the reductive cleavage of the azo bond in aromatic azo compounds to the corresponding amines. The protein is FMN-dependent NADH:quinone oxidoreductase of Nocardia farcinica (strain IFM 10152).